The following is a 574-amino-acid chain: Septation ring formation regulator EzrA (574 aa).

The Extracellular portion of the chain corresponds to 1 to 7 (MSSGIVL). A helical membrane pass occupies residues 8–26 (LIVAIVLVVIIAYLIAIII). At 27 to 574 (RKRNDSLITK…YEKTRETIRF (548 aa)) the chain is on the cytoplasmic side. Coiled-coil stretches lie at residues 102 to 141 (NFIR…EEKN), 255 to 368 (KNIE…KDVL), and 409 to 495 (LKNI…EETA).

Belongs to the EzrA family.

It is found in the cell membrane. Functionally, negative regulator of FtsZ ring formation; modulates the frequency and position of FtsZ ring formation. Inhibits FtsZ ring formation at polar sites. Interacts either with FtsZ or with one of its binding partners to promote depolymerization. The sequence is that of Septation ring formation regulator EzrA from Streptococcus mutans serotype c (strain ATCC 700610 / UA159).